Here is a 639-residue protein sequence, read N- to C-terminus: Coiled-coil domain-containing protein 27 (639 aa).

The segment at 154 to 176 (YPRKRSEPSDPSPTGSPTVVKKS) is disordered. A coiled-coil region spans residues 203–242 (QRFSEMESQMQKKDQEILTLQKEKEALKKQLKNLLRGKGT). The tract at residues 291-385 (ESSKELHVEP…EECHPKRSYS (95 aa)) is disordered. Positions 292–309 (SSKELHVEPGSAIEEKSS) are enriched in basic and acidic residues. Residues 310–320 (EGPPEEAAAAK) show a composition bias toward low complexity. 2 stretches are compositionally biased toward acidic residues: residues 336 to 350 (GPEEEEEEEEEEVEG) and 358 to 369 (EGEILVNEEEAS). The span at 370–380 (WELREDEECHP) shows a compositional bias: basic and acidic residues.

This is Coiled-coil domain-containing protein 27 (Ccdc27) from Mus musculus (Mouse).